Consider the following 833-residue polypeptide: Vacuolar protein sorting-associated protein 16 homolog (833 aa).

Belongs to the VPS16 family. Component of the homotypic fusion and vacuole protein sorting (HOPS) complex, composed of Vps16A, car/Vps33A, dor/Vps18, Vps39, Vps11 and lt/Vps41. Interacts with Syx17 (via SNARE domain); the interaction may involve multiple components of the HOPS complex and may promote assembly of the Syx17-Snap29-Vamp7 trans-SNARE complex. Component of the class C core vacuole/endosome tethering (CORVET) complex composed of at least Vps8, dor/Vps18, car/Vps33A and Vps16A; unlike in other species, Vps11 is not part of the Drosophila complex. Due to the reduced number of components the Drosophila CORVET complex is often referred to as the miniCORVET complex. The tethering complex core made up of Vps16A, car/Vps33A and dor/Vps18 and shared by both HOPS and CORVET, preferentially associates with CORVET-specific Vps8 over HOPS-specific lt/Vps41. Interacts with Rab2 (GTP-bound form).

It localises to the late endosome membrane. The protein localises to the lysosome membrane. It is found in the cytoplasmic vesicle. Its subcellular location is the autophagosome. Its function is as follows. Core component of the class C core vacuole/endosome tethering (CORVET) and the homotypic fusion and vacuole protein sorting (HOPS) tethering complexes involved in endo-lysosomal vesicle trafficking and lysosome biogenesis. The CORVET complex facilitates docking and fusion of endosomal vesicles during endosome maturation, acts upstream of HOPS, but is not involved in autophagic flux. The CORVET complex may cooperate with the early endosomal tether Rbsn-5 to mediate endosomal fusion. The HOPS complex facilitates docking and fusion of lysosomes with late endosomes and several other types of vesicles. The HOPS complex is also involved in autophagy and crinophagy (the elimination of unused secretory granules through their fusion with lysosomes). The HOPS complex mediates autophagocitic flux, probably by binding autophagosome-associated Syx17/syntaxin 17, promoting assembly of the trans-SNARE complex and instigating autophagosome-lysosome fusion. Independent of Syx17/syntaxin 17, HOPS is involved in biosynthetic transport to lysosomes and lysosome-related organelles such as eye-pigment granules. Required for endocytic degradation of boss/bride of sevenless and N/Notch in developing ommatidia. The sequence is that of Vacuolar protein sorting-associated protein 16 homolog from Drosophila melanogaster (Fruit fly).